Reading from the N-terminus, the 543-residue chain is Cobyric acid synthase (543 aa).

Residues 260–483 (MLDIVLVDLP…LHGVFDADGF (224 aa)) form the GATase cobBQ-type domain. Cys346 functions as the Nucleophile in the catalytic mechanism. His475 is a catalytic residue.

It belongs to the CobB/CobQ family. CobQ subfamily.

It participates in cofactor biosynthesis; adenosylcobalamin biosynthesis. Functionally, catalyzes amidations at positions B, D, E, and G on adenosylcobyrinic A,C-diamide. NH(2) groups are provided by glutamine, and one molecule of ATP is hydrogenolyzed for each amidation. The chain is Cobyric acid synthase from Nitratidesulfovibrio vulgaris (strain ATCC 29579 / DSM 644 / CCUG 34227 / NCIMB 8303 / VKM B-1760 / Hildenborough) (Desulfovibrio vulgaris).